The sequence spans 487 residues: Protein nucleotidyltransferase YdiU (487 aa).

Residues Gly-90, Gly-92, Arg-93, Lys-113, Asp-125, Gly-126, Arg-176, and Arg-183 each coordinate ATP. Asp-252 acts as the Proton acceptor in catalysis. Residues Asn-253 and Asp-262 each coordinate Mg(2+). Asp-262 is a binding site for ATP.

The protein belongs to the SELO family. Requires Mg(2+) as cofactor. Mn(2+) is required as a cofactor.

The enzyme catalyses L-seryl-[protein] + ATP = 3-O-(5'-adenylyl)-L-seryl-[protein] + diphosphate. The catalysed reaction is L-threonyl-[protein] + ATP = 3-O-(5'-adenylyl)-L-threonyl-[protein] + diphosphate. It carries out the reaction L-tyrosyl-[protein] + ATP = O-(5'-adenylyl)-L-tyrosyl-[protein] + diphosphate. It catalyses the reaction L-histidyl-[protein] + UTP = N(tele)-(5'-uridylyl)-L-histidyl-[protein] + diphosphate. The enzyme catalyses L-seryl-[protein] + UTP = O-(5'-uridylyl)-L-seryl-[protein] + diphosphate. The catalysed reaction is L-tyrosyl-[protein] + UTP = O-(5'-uridylyl)-L-tyrosyl-[protein] + diphosphate. In terms of biological role, nucleotidyltransferase involved in the post-translational modification of proteins. It can catalyze the addition of adenosine monophosphate (AMP) or uridine monophosphate (UMP) to a protein, resulting in modifications known as AMPylation and UMPylation. This chain is Protein nucleotidyltransferase YdiU, found in Azotobacter vinelandii (strain DJ / ATCC BAA-1303).